A 381-amino-acid polypeptide reads, in one-letter code: CD209 antigen (381 aa).

Residues 1–37 (MSDSKEPSVQQLGLLEEEQLRGLGFRQTRGYKSLAGC) are Cytoplasmic-facing. Short sequence motifs (endocytosis signal) lie at residues 14 to 15 (LL), 16 to 18 (EEE), and 31 to 34 (YKSL). The chain crosses the membrane as a helical; Signal-anchor for type II membrane protein span at residues 38-58 (LGHGXLVLQLLSFTXLAGLLI). Residues 59 to 381 (QVSKFPSSIS…APATPNPPPA (323 aa)) are Extracellular-facing. Asn-80 carries an N-linked (GlcNAc...) asparagine glycan. 6 repeat units span residues 96–118 (KLQE…PEKS), 119–141 (QQQE…PEKS), 142–164 (TQQE…PEQS), 165–187 (KLQE…PEKS), 188–210 (KQQE…PEKS), and 211–234 (KQQE…RPCP). The tract at residues 96 to 303 (KLQEIYQELT…GLSDVNQEGT (208 aa)) is 6 X approximate tandem repeats. Disulfide bonds link Cys-233–Cys-244, Cys-261–Cys-354, and Cys-333–Cys-346. The 116-residue stretch at 240–355 (FQGNCYFMSN…CNHAKFWICK (116 aa)) folds into the C-type lectin domain. 6 residues coordinate Ca(2+): Glu-324, Asn-326, Ile-328, Glu-331, Asn-342, and Asp-343.

In terms of assembly, homotetramer. Interacts with C1QBP; the interaction is indicative for a C1q:C1QBP:CD209 signaling complex. Interacts with ICAM2 and ICAM3 by binding to mannose-like carbohydrates. Interacts (via C-type lectin domain) with CEACAM1 (via Lewis X moieties); this interaction is regulated by the glycosylation pattern of CEACAM1 on cell types and regulates contact between dendritic cells and neutrophils.

It localises to the membrane. In terms of biological role, pathogen-recognition receptor expressed on the surface of immature dendritic cells (DCs) and involved in initiation of primary immune response. Thought to mediate the endocytosis of pathogens which are subsequently degraded in lysosomal compartments. The receptor returns to the cell membrane surface and the pathogen-derived antigens are presented to resting T-cells via MHC class II proteins to initiate the adaptive immune response. Probably recognizes in a calcium-dependent manner high mannose N-linked oligosaccharides in a variety of pathogen antigens. Its function is as follows. On DCs it is a high affinity receptor for ICAM2 and ICAM3 by binding to mannose-like carbohydrates. May act as a DC rolling receptor that mediates transendothelial migration of DC presursors from blood to tissues by binding endothelial ICAM2. Seems to regulate DC-induced T-cell proliferation by binding to ICAM3 on T-cells in the immunological synapse formed between DC and T-cells. The chain is CD209 antigen (CD209) from Symphalangus syndactylus (Siamang).